Consider the following 289-residue polypeptide: 4-diphosphocytidyl-2-C-methyl-D-erythritol kinase (289 aa).

Lys11 is a catalytic residue. ATP is bound at residue 93–103 (PLAAGLAGGSA). Residue Asp135 is part of the active site.

This sequence belongs to the GHMP kinase family. IspE subfamily.

The catalysed reaction is 4-CDP-2-C-methyl-D-erythritol + ATP = 4-CDP-2-C-methyl-D-erythritol 2-phosphate + ADP + H(+). Its pathway is isoprenoid biosynthesis; isopentenyl diphosphate biosynthesis via DXP pathway; isopentenyl diphosphate from 1-deoxy-D-xylulose 5-phosphate: step 3/6. In terms of biological role, catalyzes the phosphorylation of the position 2 hydroxy group of 4-diphosphocytidyl-2C-methyl-D-erythritol. The chain is 4-diphosphocytidyl-2-C-methyl-D-erythritol kinase from Thermoanaerobacter pseudethanolicus (strain ATCC 33223 / 39E) (Clostridium thermohydrosulfuricum).